We begin with the raw amino-acid sequence, 702 residues long: Ribosomal RNA large subunit methyltransferase K/L (702 aa).

A THUMP domain is found at 43–154; the sequence is LVYQSLMWSR…KETASIALDL (112 aa).

This sequence belongs to the methyltransferase superfamily. RlmKL family.

The protein resides in the cytoplasm. The enzyme catalyses guanosine(2445) in 23S rRNA + S-adenosyl-L-methionine = N(2)-methylguanosine(2445) in 23S rRNA + S-adenosyl-L-homocysteine + H(+). The catalysed reaction is guanosine(2069) in 23S rRNA + S-adenosyl-L-methionine = N(2)-methylguanosine(2069) in 23S rRNA + S-adenosyl-L-homocysteine + H(+). Functionally, specifically methylates the guanine in position 2445 (m2G2445) and the guanine in position 2069 (m7G2069) of 23S rRNA. The chain is Ribosomal RNA large subunit methyltransferase K/L from Shigella sonnei (strain Ss046).